Reading from the N-terminus, the 159-residue chain is MISRVVLTTYVYPTEDEEKVRKAVGNLFDLEMFEEREEEMGDLRRLEFVCEGPQARLSLGRIYELLREQEILDAARRVLREGVTAEGSILFHLNKQAAFAGSVSFAEGGESPLGPIVVEVFPERPEDVEKVIDWLAPETIDGKPIYEVKKPRLREEELE.

The protein belongs to the UPF0201 family.

The protein is UPF0201 protein MK0399 of Methanopyrus kandleri (strain AV19 / DSM 6324 / JCM 9639 / NBRC 100938).